The chain runs to 320 residues: Aspartate carbamoyltransferase catalytic subunit (320 aa).

Arg-68 and Thr-69 together coordinate carbamoyl phosphate. Lys-96 is an L-aspartate binding site. Positions 118, 148, and 151 each coordinate carbamoyl phosphate. L-aspartate contacts are provided by Arg-181 and Arg-236. The carbamoyl phosphate site is built by Gly-277 and Pro-278.

The protein belongs to the aspartate/ornithine carbamoyltransferase superfamily. ATCase family. Heterododecamer (2C3:3R2) of six catalytic PyrB chains organized as two trimers (C3), and six regulatory PyrI chains organized as three dimers (R2).

It catalyses the reaction carbamoyl phosphate + L-aspartate = N-carbamoyl-L-aspartate + phosphate + H(+). It participates in pyrimidine metabolism; UMP biosynthesis via de novo pathway; (S)-dihydroorotate from bicarbonate: step 2/3. Its function is as follows. Catalyzes the condensation of carbamoyl phosphate and aspartate to form carbamoyl aspartate and inorganic phosphate, the committed step in the de novo pyrimidine nucleotide biosynthesis pathway. This Delftia acidovorans (strain DSM 14801 / SPH-1) protein is Aspartate carbamoyltransferase catalytic subunit.